The following is a 238-amino-acid chain: RAD9, HUS1, RAD1-interacting nuclear orphan protein 1 (238 aa).

Residues 1–10 (MPPRKKRRQP) show a composition bias toward basic residues. The segment at 1 to 31 (MPPRKKRRQPSQKAPLLFHQQPLEGPKHSCA) is disordered. Phosphoserine; by PLK1 is present on S51. Residues 55-61 (SWVSPDF) carry the RAD1-binding motif motif. Residues 74-105 (KHQNRARHSSRKPTTSKFPHLTFESPQSSSSE) are disordered. Residues 75–84 (HQNRARHSSR) are compositionally biased toward basic residues. The D-box motif lies at 125–132 (RRPLVPVL). The KEN box signature appears at 174 to 178 (QKENS).

In terms of assembly, interacts (when phosphorylated by PLK1) with POLQ; promoting POLQ recruitment to DNA damage sites. Interacts with RAD1; interaction is direct and promotes association with the 9-1-1 (RAD9-RAD1-HUS1) complex. Interacts with RAD18. Interacts with TOPBP1. Interacts with UBE2N. In terms of processing, phosphorylated at Ser-51 by PLK1, promoting interaction with polymerase theta (POLQ). Post-translationally, ubiquitinated and degraded by the APC/C complex upon mitotic exit. Weakly expressed in testis, prostate, ovary, thymus and small intestine. Expressed strongly in breast cancer cells.

It localises to the nucleus. The protein localises to the chromosome. In terms of biological role, involved in microhomology-mediated end-joining (MMEJ) DNA repair by promoting recruitment of polymerase theta (POLQ) to DNA damage sites during mitosis. MMEJ is an alternative non-homologous end-joining (NHEJ) machinery that takes place during mitosis to repair double-strand breaks in DNA that originate in S-phase. Accumulates in M-phase; following phosphorylation by PLK1, interacts with POLQ, enabling its recruitment to double-strand breaks for subsequent repair. Also involved in the DNA damage response (DDR) signaling in response to genotoxic stresses such as ionizing radiation (IR) during the S phase. Recruited to sites of DNA damage through interaction with the 9-1-1 cell-cycle checkpoint response complex and TOPBP1 in a ATR-dependent manner. Required for the progression of the G1 to S phase transition. Plays a role in the stimulation of CHEK1 phosphorylation. The sequence is that of RAD9, HUS1, RAD1-interacting nuclear orphan protein 1 from Homo sapiens (Human).